Here is a 375-residue protein sequence, read N- to C-terminus: Zinc finger CCCH domain-containing protein 57 (375 aa).

5 consecutive C3H1-type zinc fingers follow at residues 42-70, 87-115, 133-161, 243-271, and 289-317; these read RHGE…HPHD, RIGQ…HPRN, RPNE…HPQT, RPGQ…HPRD, and RPGE…HPMR. Positions 352-375 are disordered; sequence SVEAKPTSLPETTSAKDTIVDAQH.

It localises to the nucleus. This chain is Zinc finger CCCH domain-containing protein 57 (ZFN3), found in Arabidopsis thaliana (Mouse-ear cress).